The chain runs to 112 residues: Peptidyl-prolyl cis-trans isomerase FKBP12 (112 aa).

The disordered stretch occupies residues 1-22 (MGVEKQIIRAGTGPNPSRGQNV). Residues 19 to 112 (GQNVTVHCTG…EFEIEVLRAQ (94 aa)) enclose the PPIase FKBP-type domain. The cysteines at positions 26 and 80 are disulfide-linked.

This sequence belongs to the FKBP-type PPIase family. As to quaternary structure, interacts with FK506.

The protein localises to the cytoplasm. It carries out the reaction [protein]-peptidylproline (omega=180) = [protein]-peptidylproline (omega=0). Functionally, PPIases accelerate the folding of proteins. It catalyzes the cis-trans isomerization of proline imidic peptide bonds in oligopeptides. This Vicia faba (Broad bean) protein is Peptidyl-prolyl cis-trans isomerase FKBP12 (FKBP12).